The primary structure comprises 386 residues: Threonine--tRNA ligase editing subunit (386 aa).

It belongs to the class-II aminoacyl-tRNA synthetase family. Archaea-specific ThrRS editing domain subfamily. In terms of assembly, probably interacts with its catalytic subunit (AC Q97VW8); a subunit fusion (in the order edit-catalytic) is fully functional.

The protein localises to the cytoplasm. Functionally, freestanding tRNA editing subunit of threonine--tRNA ligase, the catalytic subunit is AC Q97VW8. Deacylates (edits) mischarged L-seryl-tRNA(Thr) in trans, removing L-serine, has no aminoacylation activity. In vitro when both subunits are present, or if the 2 subunits are fused, L-seryl-tRNA(Thr) is no longer produced. Has no activity on correctly acylated L-seryl-tRNA(Ser) or L-threonyl-tRNA(Thr). Editing is probably catalyzed by the 2'-OH of A76 of tRNA(Thr). The sequence is that of Threonine--tRNA ligase editing subunit from Saccharolobus solfataricus (strain ATCC 35092 / DSM 1617 / JCM 11322 / P2) (Sulfolobus solfataricus).